The sequence spans 360 residues: Phospho-N-acetylmuramoyl-pentapeptide-transferase (360 aa).

The next 10 helical transmembrane spans lie at 26–46 (AILG…AMIR), 70–90 (GTPT…TLLW), 97–117 (FVWV…IDDY), 134–154 (FFWQ…TAQA), 168–188 (VAIQ…VGAS), 199–219 (GLAI…AYLS), 236–256 (VGDL…FLWF), 263–283 (VFMG…LAVV), 288–308 (IVLV…IMQV), and 338–358 (VIVR…ATLK).

It belongs to the glycosyltransferase 4 family. MraY subfamily. Requires Mg(2+) as cofactor.

It localises to the cell inner membrane. The catalysed reaction is UDP-N-acetyl-alpha-D-muramoyl-L-alanyl-gamma-D-glutamyl-meso-2,6-diaminopimeloyl-D-alanyl-D-alanine + di-trans,octa-cis-undecaprenyl phosphate = di-trans,octa-cis-undecaprenyl diphospho-N-acetyl-alpha-D-muramoyl-L-alanyl-D-glutamyl-meso-2,6-diaminopimeloyl-D-alanyl-D-alanine + UMP. Its pathway is cell wall biogenesis; peptidoglycan biosynthesis. Functionally, catalyzes the initial step of the lipid cycle reactions in the biosynthesis of the cell wall peptidoglycan: transfers peptidoglycan precursor phospho-MurNAc-pentapeptide from UDP-MurNAc-pentapeptide onto the lipid carrier undecaprenyl phosphate, yielding undecaprenyl-pyrophosphoryl-MurNAc-pentapeptide, known as lipid I. In Thioalkalivibrio sulfidiphilus (strain HL-EbGR7), this protein is Phospho-N-acetylmuramoyl-pentapeptide-transferase.